We begin with the raw amino-acid sequence, 225 residues long: MNKVAEIFREYGIKIDDSKTEKLDSYIDLLISAPINLTSLRDKEYAIHKHIVDIVFPVKMLTGKLLDVGTGGGIPGLILAILFPINATLVESVRKKVMWLEKILNMLNIGNVNLLCSRAEKLPADKKESFDIVTARAVSELRILLELCAPFCKVGGRLFFYKGPNWKQEYDAAHNAMKTLNVETIEIVSYTLKTGEKRVLLQFQKVGRTPDNYPRETKKILKNPL.

S-adenosyl-L-methionine contacts are provided by residues glycine 69, 119 to 120 (AE), and arginine 136.

It belongs to the methyltransferase superfamily. RNA methyltransferase RsmG family.

It localises to the cytoplasm. In terms of biological role, specifically methylates the N7 position of a guanine in 16S rRNA. This chain is Ribosomal RNA small subunit methyltransferase G, found in Pseudothermotoga lettingae (strain ATCC BAA-301 / DSM 14385 / NBRC 107922 / TMO) (Thermotoga lettingae).